Here is a 68-residue protein sequence, read N- to C-terminus: Tetrahydromethanopterin S-methyltransferase subunit F (68 aa).

The chain crosses the membrane as a helical span at residues 45 to 65 (IAIGFLLAVLLVGVPAMMSIL).

It belongs to the MtrF family. In terms of assembly, the complex is composed of 8 subunits; MtrA, MtrB, MtrC, MtrD, MtrE, MtrF, MtrG and MtrH.

It is found in the cell membrane. It carries out the reaction 5-methyl-5,6,7,8-tetrahydromethanopterin + coenzyme M + 2 Na(+)(in) = 5,6,7,8-tetrahydromethanopterin + methyl-coenzyme M + 2 Na(+)(out). It functions in the pathway one-carbon metabolism; methanogenesis from CO(2); methyl-coenzyme M from 5,10-methylene-5,6,7,8-tetrahydromethanopterin: step 2/2. In terms of biological role, part of a complex that catalyzes the formation of methyl-coenzyme M and tetrahydromethanopterin from coenzyme M and methyl-tetrahydromethanopterin. This is an energy-conserving, sodium-ion translocating step. The chain is Tetrahydromethanopterin S-methyltransferase subunit F (mtrF) from Methanothermobacter marburgensis (strain ATCC BAA-927 / DSM 2133 / JCM 14651 / NBRC 100331 / OCM 82 / Marburg) (Methanobacterium thermoautotrophicum).